Reading from the N-terminus, the 719-residue chain is Protein borderless (719 aa).

The signal sequence occupies residues 1 to 33 (MPAKRSRTFRQSGSALLALLAIILLMNISCTSA). Over 34 to 650 (ARDHRRQTNL…IDVPSQRKVR (617 aa)) the chain is Extracellular. 4 consecutive Ig-like domains span residues 40–128 (QTNL…CQVS), 134–241 (PSVR…AFLN), 246–334 (AKVI…PVIS), and 341–429 (PIFS…AELM). 4 disulfide bridges follow: Cys55–Cys125, Cys172–Cys224, Cys267–Cys318, and Cys363–Cys413. Fibronectin type-III domains lie at 434-527 (APRA…TLPS) and 555-646 (APWN…VPSQ). Residues 651–671 (ALIIGSSVGVIFLLCALCAFL) form a helical membrane-spanning segment. The Cytoplasmic portion of the chain corresponds to 672–719 (YVKRSCLRHLFAKDSSASEDEDTAESGDCDSDEQDQRDRDSIKIRQST). The disordered stretch occupies residues 685 to 719 (DSSASEDEDTAESGDCDSDEQDQRDRDSIKIRQST). The span at 688-704 (ASEDEDTAESGDCDSDE) shows a compositional bias: acidic residues. The segment covering 705–719 (QDQRDRDSIKIRQST) has biased composition (basic and acidic residues).

This sequence belongs to the immunoglobulin superfamily. As to quaternary structure, interacts with tutl. In terms of tissue distribution, in the visual system, expressed in lamina and medulla (at protein level).

Its subcellular location is the cell membrane. The protein resides in the cell projection. It localises to the axon. Functionally, in the developing eye, has a role in axonal targeting of the R7 photoreceptor where it functions together with tutl. Probably mediates homotypic cell adhesion; the effect is inhibited by Lar. The polypeptide is Protein borderless (Drosophila melanogaster (Fruit fly)).